Reading from the N-terminus, the 158-residue chain is Snaclec mucrocetin subunit alpha (158 aa).

Positions 1–23 (MGRFIFVSFGLLVVFLSLSGTGA) are cleaved as a signal peptide. 3 disulfides stabilise this stretch: Cys-27–Cys-38, Cys-55–Cys-152, and Cys-127–Cys-144. One can recognise a C-type lectin domain in the interval 34–153 (YDRYCYQAFS…CGRENPFVCK (120 aa)).

Belongs to the snaclec family. As to quaternary structure, tetramer of heterodimers of alpha and beta subunits (alphabeta)(4); disulfide-linked. Expressed by the venom gland.

The protein localises to the secreted. Platelet-agglutinating factor that acts in a vWF-independent manner. Binds specifically to platelet GPIbalpha (GP1BA) to a distinct binding site from that of flavocetin-A. In Protobothrops mucrosquamatus (Taiwan habu), this protein is Snaclec mucrocetin subunit alpha.